The sequence spans 699 residues: Elongation factor G (699 aa).

In terms of domain architecture, tr-type G spans Glu8 to Ile283. GTP contacts are provided by residues Ala17 to Thr24, Asp81 to His85, and Asn135 to Asp138.

Belongs to the TRAFAC class translation factor GTPase superfamily. Classic translation factor GTPase family. EF-G/EF-2 subfamily.

It is found in the cytoplasm. Catalyzes the GTP-dependent ribosomal translocation step during translation elongation. During this step, the ribosome changes from the pre-translocational (PRE) to the post-translocational (POST) state as the newly formed A-site-bound peptidyl-tRNA and P-site-bound deacylated tRNA move to the P and E sites, respectively. Catalyzes the coordinated movement of the two tRNA molecules, the mRNA and conformational changes in the ribosome. The sequence is that of Elongation factor G from Rickettsia africae (strain ESF-5).